Reading from the N-terminus, the 109-residue chain is Small ribosomal subunit protein bS6 (109 aa).

This sequence belongs to the bacterial ribosomal protein bS6 family.

Binds together with bS18 to 16S ribosomal RNA. This chain is Small ribosomal subunit protein bS6, found in Anaplasma phagocytophilum (strain HZ).